The following is a 260-amino-acid chain: MSHHWGYSKSNGPENWHKEFPIANGDRQSPVDIDTGTAQHDPSLQPLLICYDKVASKSIVNNGHSFNVEFDDSQDFAVLKEGPLSGSYRLIQFHFHWGSSDGQGSEHTVNKKKYAAELHLVHWNTKYGDFGKAVQHPDGLAVLGIFLKIGPASQGLQKITEALHSIKTKGKRAAFANFDPCSLLPGNLDYWTYPGSLTTPPLLECVTWIVLKEPITVSSEQMSHFRKLNFNSEGEAEELMVDNWRPAQPLKNRKIKASFK.

Serine 2 carries the post-translational modification N-acetylserine. At serine 2 the chain carries Phosphoserine. Positions 3–259 (HHWGYSKSNG…LKNRKIKASF (257 aa)) constitute an Alpha-carbonic anhydrase domain. The interval 16–39 (WHKEFPIANGDRQSPVDIDTGTAQ) is disordered. The active-site Proton donor/acceptor is the histidine 64. Serine 87 bears the Phosphoserine mark. Zn(2+) is bound by residues histidine 94, histidine 96, and histidine 119. Serine 165 is modified (phosphoserine). 198–199 (TT) is a binding site for substrate. Position 232 is a phosphoserine (serine 232).

Belongs to the alpha-carbonic anhydrase family. In terms of assembly, interacts with SLC4A4 and SLC26A6. Interaction with SLC4A7 regulates SLC4A7 transporter activity. It depends on Zn(2+) as a cofactor.

It localises to the cytoplasm. The protein localises to the cell membrane. It carries out the reaction hydrogencarbonate + H(+) = CO2 + H2O. The enzyme catalyses urea = cyanamide + H2O. With respect to regulation, inhibited by acetazolamide. In terms of biological role, catalyzes the reversible hydration of carbon dioxide. Can also hydrate cyanamide to urea. Involved in the regulation of fluid secretion into the anterior chamber of the eye. Essential for bone resorption and osteoclast differentiation. Contributes to intracellular pH regulation in the duodenal upper villous epithelium during proton-coupled peptide absorption. Stimulates the chloride-bicarbonate exchange activity of SLC26A6. The sequence is that of Carbonic anhydrase 2 (Ca2) from Rattus norvegicus (Rat).